Reading from the N-terminus, the 215-residue chain is LexA repressor (215 aa).

The segment at residues 28–48 (RAEIAAELGFSSPNAAEEHLR) is a DNA-binding region (H-T-H motif). Catalysis depends on for autocatalytic cleavage activity residues serine 133 and lysine 170.

Belongs to the peptidase S24 family. In terms of assembly, homodimer.

It catalyses the reaction Hydrolysis of Ala-|-Gly bond in repressor LexA.. Its function is as follows. Represses a number of genes involved in the response to DNA damage (SOS response), including recA and lexA. In the presence of single-stranded DNA, RecA interacts with LexA causing an autocatalytic cleavage which disrupts the DNA-binding part of LexA, leading to derepression of the SOS regulon and eventually DNA repair. The polypeptide is LexA repressor (Burkholderia thailandensis (strain ATCC 700388 / DSM 13276 / CCUG 48851 / CIP 106301 / E264)).